Consider the following 779-residue polypeptide: Endonuclease MutS2 (779 aa).

328–335 (GPNTGGKT) lines the ATP pocket. Residues 704–779 (LDLRGKRYEE…GSGATIVTLG (76 aa)) form the Smr domain.

Belongs to the DNA mismatch repair MutS family. MutS2 subfamily. Homodimer. Binds to stalled ribosomes, contacting rRNA.

Endonuclease that is involved in the suppression of homologous recombination and thus may have a key role in the control of bacterial genetic diversity. In terms of biological role, acts as a ribosome collision sensor, splitting the ribosome into its 2 subunits. Detects stalled/collided 70S ribosomes which it binds and splits by an ATP-hydrolysis driven conformational change. Acts upstream of the ribosome quality control system (RQC), a ribosome-associated complex that mediates the extraction of incompletely synthesized nascent chains from stalled ribosomes and their subsequent degradation. Probably generates substrates for RQC. This Streptococcus agalactiae serotype Ia (strain ATCC 27591 / A909 / CDC SS700) protein is Endonuclease MutS2.